The sequence spans 76 residues: DNA-directed RNA polymerase subunit epsilon (76 aa).

This sequence belongs to the RNA polymerase subunit epsilon family. In terms of assembly, RNAP is composed of a core of 2 alpha, a beta and a beta' subunit. The core is associated with a delta subunit, and at least one of epsilon or omega. When a sigma factor is associated with the core the holoenzyme is formed, which can initiate transcription.

The catalysed reaction is RNA(n) + a ribonucleoside 5'-triphosphate = RNA(n+1) + diphosphate. In terms of biological role, a non-essential component of RNA polymerase (RNAP). This Streptococcus mutans serotype c (strain ATCC 700610 / UA159) protein is DNA-directed RNA polymerase subunit epsilon.